The primary structure comprises 1585 residues: Sterol 3-beta-glucosyltransferase (1585 aa).

A compositionally biased stretch (pro residues) spans 1-18 (MSPPISPTPPPLQPPFPP). Disordered stretches follow at residues 1–151 (MSPP…ESSF), 177–225 (PWEE…PTHT), and 249–279 (YQYA…LPKG). 3 stretches are compositionally biased toward polar residues: residues 65–92 (DQAT…NAIT), 105–123 (DAQT…STHE), and 132–148 (PRTS…QMAE). Residues 178–194 (WEEDDDSDDGEDDDEFI) show a composition bias toward acidic residues. The segment covering 255–273 (ETSSRRTSAAGSESSSEGE) has biased composition (low complexity). The GRAM 1 domain maps to 387 to 555 (ERLMEVFGLE…EAIVDVEKSP (169 aa)). Residues 438-530 (LLVKSGPLHK…WVKAIQKVMF (93 aa)) enclose the PH domain. Disordered regions lie at residues 625 to 645 (TSHA…LGMA) and 666 to 852 (DGEP…GSES). The segment covering 670 to 689 (LEEHSQGPHHNDEDASHLPH) has biased composition (basic and acidic residues). Polar residues-rich tracts occupy residues 760-785 (TDSS…QASV), 806-817 (NKPSVVDSNSAE), and 827-840 (SWTS…QMVK). The 72-residue stretch at 862-933 (RKFRTFFALS…RDLYGLKAQK (72 aa)) folds into the GRAM 2 domain. 10 residues coordinate UDP-alpha-D-glucose: Ser-1043, Arg-1044, Asp-1046, Ile-1358, His-1360, His-1373, Gly-1377, Thr-1378, Asp-1397, and Gln-1398. The interval 1499-1552 (NRVRSRSRSRSRSSQGRFSPRRHTVDDDGWSVVSGGSRSRSGSASAVTSPERRP) is disordered. A compositionally biased stretch (low complexity) spans 1529–1545 (SVVSGGSRSRSGSASAV).

The protein belongs to the glycosyltransferase 28 family.

It localises to the cytoplasm. It is found in the membrane. It catalyses the reaction a sterol + UDP-alpha-D-glucose = a sterol 3-beta-D-glucoside + UDP + H(+). The catalysed reaction is ergosterol + UDP-alpha-D-glucose = ergosteryl 3-beta-D-glucoside + UDP + H(+). Functionally, sterol glycosyltransferase responsible for the glycosylation of ergosterol to form ergosterol-glucoside. In Cryptococcus neoformans var. neoformans serotype D (strain B-3501A) (Filobasidiella neoformans), this protein is Sterol 3-beta-glucosyltransferase.